Consider the following 861-residue polypeptide: Leucine--tRNA ligase (861 aa).

The short motif at 42-52 (PYPSGRLHMGH) is the 'HIGH' region element. A 'KMSKS' region motif is present at residues 619 to 623 (KMSKS). Lys-622 lines the ATP pocket.

Belongs to the class-I aminoacyl-tRNA synthetase family.

The protein localises to the cytoplasm. The enzyme catalyses tRNA(Leu) + L-leucine + ATP = L-leucyl-tRNA(Leu) + AMP + diphosphate. In Haemophilus influenzae (strain 86-028NP), this protein is Leucine--tRNA ligase.